The chain runs to 458 residues: Bone morphogenetic protein 3 (458 aa).

Residues 1 to 23 form the signal peptide; it reads MAECRPWLVLWVGCCGCLCLALG. A propeptide spanning residues 24 to 348 is cleaved from the precursor; it reads ELLNDGLLAV…EQTLKKARRK (325 aa). N-linked (GlcNAc...) asparagine glycosylation occurs at Asn-107. 2 disordered regions span residues 244–275 and 303–335; these read DSVV…KKRS and ERKP…SQTL. Over residues 320 to 329 the composition is skewed to basic residues; that stretch reads NKKKLRKGSR. 3 cysteine pairs are disulfide-bonded: Cys-356-Cys-423, Cys-385-Cys-455, and Cys-389-Cys-457. N-linked (GlcNAc...) asparagine glycosylation occurs at Asn-449.

The protein belongs to the TGF-beta family. As to quaternary structure, homodimer. Can form heterodimers with ADMP, BMP-2-I and/or BMP-2-II, and DERRIERE.

It localises to the secreted. Functionally, dorsalizing factor. Antagonizes mesoderm formation by ventralizing BMPs. This Xenopus laevis (African clawed frog) protein is Bone morphogenetic protein 3 (bmp3).